We begin with the raw amino-acid sequence, 441 residues long: Ribosomal protein uS12 methylthiotransferase RimO (441 aa).

The MTTase N-terminal domain occupies 7-117 (ASIAMISLGC…VVLEVHRAAP (111 aa)). 6 residues coordinate [4Fe-4S] cluster: Cys16, Cys52, Cys81, Cys150, Cys154, and Cys157. The Radical SAM core domain maps to 136–373 (LTPRHYAYLK…MAHQQAISAA (238 aa)). The region spanning 376–441 (QTRVGREIDV…DEYDLHGDAV (66 aa)) is the TRAM domain.

It belongs to the methylthiotransferase family. RimO subfamily. Requires [4Fe-4S] cluster as cofactor.

The protein resides in the cytoplasm. It carries out the reaction L-aspartate(89)-[ribosomal protein uS12]-hydrogen + (sulfur carrier)-SH + AH2 + 2 S-adenosyl-L-methionine = 3-methylsulfanyl-L-aspartate(89)-[ribosomal protein uS12]-hydrogen + (sulfur carrier)-H + 5'-deoxyadenosine + L-methionine + A + S-adenosyl-L-homocysteine + 2 H(+). Catalyzes the methylthiolation of an aspartic acid residue of ribosomal protein uS12. This is Ribosomal protein uS12 methylthiotransferase RimO from Bordetella petrii (strain ATCC BAA-461 / DSM 12804 / CCUG 43448).